Consider the following 162-residue polypeptide: Nucleotide-binding protein AnaeK_0101 (162 aa).

It belongs to the YajQ family.

Its function is as follows. Nucleotide-binding protein. The polypeptide is Nucleotide-binding protein AnaeK_0101 (Anaeromyxobacter sp. (strain K)).